A 595-amino-acid chain; its full sequence is Polyadenylate-binding protein-interacting protein 4 (595 aa).

The Sm domain maps to 48–113 (RLVYFTTCKI…SRSEFVRKPP (66 aa)). Polar residues-rich tracts occupy residues 302-313 (GGSSTSDGQKPA) and 326-346 (GDSQ…TSKQ). Disordered regions lie at residues 302–505 (GGSS…FYYP) and 536–595 (MYHP…KGRE). Residues 364–382 (DEQRRKNNEEVSHNNRSAE) are compositionally biased toward basic and acidic residues. Residues 416 to 465 (SQVSSKTKSESSFGQSASRSSESRPGPSTSSRPGLSPSSSIGSMASSEKS) are compositionally biased toward low complexity. The PAM2-like 1; degenerate motif lies at 466–474 (TLNPNAKEF). The PAM2-like 2 signature appears at 475 to 485 (KLNPKAKSFKP). Composition is skewed to low complexity over residues 488 to 501 (SAAA…ADAS) and 548 to 570 (QPQY…PGQQ).

In terms of tissue distribution, expressed in cauline leaves, stems, rosette leaves, immature siliques and primary inflorescences.

In Arabidopsis thaliana (Mouse-ear cress), this protein is Polyadenylate-binding protein-interacting protein 4 (CID4).